The sequence spans 226 residues: Ribose-5-phosphate isomerase A (226 aa).

Residues 32–35, 85–88, and 98–101 contribute to the substrate site; these read TGST, DGAD, and KGGG. Glu-107 (proton acceptor) is an active-site residue. Substrate is bound at residue Lys-125.

It belongs to the ribose 5-phosphate isomerase family. In terms of assembly, homodimer.

The catalysed reaction is aldehydo-D-ribose 5-phosphate = D-ribulose 5-phosphate. It functions in the pathway carbohydrate degradation; pentose phosphate pathway; D-ribose 5-phosphate from D-ribulose 5-phosphate (non-oxidative stage): step 1/1. Catalyzes the reversible conversion of ribose-5-phosphate to ribulose 5-phosphate. This is Ribose-5-phosphate isomerase A from Saccharophagus degradans (strain 2-40 / ATCC 43961 / DSM 17024).